A 78-amino-acid chain; its full sequence is Beta-defensin 29 (78 aa).

Residues 1-23 (MPVTKSYFMTVVVVLILVDETTG) form the signal peptide. 3 cysteine pairs are disulfide-bonded: cysteine 40-cysteine 67, cysteine 47-cysteine 61, and cysteine 51-cysteine 68.

It belongs to the beta-defensin family. In terms of tissue distribution, highly expressed in the cauda epididymis.

It is found in the secreted. Has antibacterial activity. In Mus musculus (Mouse), this protein is Beta-defensin 29 (Defb29).